Consider the following 369-residue polypeptide: MKTLHRCIGVALLALGALAGTAHADRIKDLTTIAGVRENALIGYGLVVGLDGSGDQTTQTPFTIQSFNNMLSQFGINVPSGASIQLKNTAAVVVTASLPAFVRPGQTIDVTVSSIGNAKSLRGGTLLLTPLKGVDGQLYALAQGNVVIGGAGASANGSKVQINQLGAGRIANGATVERTVQATVGEAGSIQLDTGTTDFGTVQNIVNAINKQFGADTAEAADGRTVNVRAPALAADRVGFVAKLQNIEVTPAQAAARVVVNARTGSVVMNQQVKLEPCAVAHGNLSVTISTEPVVSQPAPFSQGQTVAGARSNIEVKQQGGSLINVKGGTNLADVVKAINAIGANPQDLISILQAMKAANALRADLEII.

Residues 1–24 (MKTLHRCIGVALLALGALAGTAHA) form the signal peptide.

Belongs to the FlgI family. The basal body constitutes a major portion of the flagellar organelle and consists of four rings (L,P,S, and M) mounted on a central rod.

Its subcellular location is the periplasm. The protein localises to the bacterial flagellum basal body. Functionally, assembles around the rod to form the L-ring and probably protects the motor/basal body from shearing forces during rotation. In Ralstonia nicotianae (strain ATCC BAA-1114 / GMI1000) (Ralstonia solanacearum), this protein is Flagellar P-ring protein.